A 452-amino-acid chain; its full sequence is ADP-dependent glucose/glucosamine kinase (452 aa).

Residues 1–452 form the ADPK domain; that stretch reads MSWDEMYRDA…AFVSEFSLSS (452 aa). D-glucose contacts are provided by residues aspartate 33, glutamate 87, 111–112, and histidine 174; that span reads GQ. Glutamate 264 is a Mg(2+) binding site. Asparagine 290 contacts ADP. A Mg(2+)-binding site is contributed by glutamate 293. Residues 339–340, valine 426, and glycine 436 each bind ADP; that span reads HT. Residue aspartate 437 participates in D-glucose binding. Position 437 (aspartate 437) interacts with Mg(2+). Catalysis depends on aspartate 437, which acts as the Proton acceptor.

It belongs to the ADP-dependent glucokinase family. Requires Mg(2+) as cofactor.

Its subcellular location is the cytoplasm. The enzyme catalyses D-glucose + ADP = D-glucose 6-phosphate + AMP + H(+). The catalysed reaction is D-glucosamine + ADP = D-glucosamine 6-phosphate + AMP + H(+). It participates in carbohydrate degradation; glycolysis. Its function is as follows. Catalyzes the ADP-dependent phosphorylation of D-glucose to D-glucose 6-phosphate and glucosamine to glucosamine 6-phosphate. This chain is ADP-dependent glucose/glucosamine kinase, found in Pyrococcus abyssi (strain GE5 / Orsay).